A 913-amino-acid polypeptide reads, in one-letter code: Protein translocase subunit SecA (913 aa).

ATP-binding positions include glutamine 87, 105–109 (GEGKT), and aspartate 512. The Zn(2+) site is built by cysteine 897, cysteine 899, cysteine 908, and histidine 909.

This sequence belongs to the SecA family. Monomer and homodimer. Part of the essential Sec protein translocation apparatus which comprises SecA, SecYEG and auxiliary proteins SecDF-YajC and YidC. It depends on Zn(2+) as a cofactor.

The protein localises to the cell inner membrane. The protein resides in the cytoplasm. The enzyme catalyses ATP + H2O + cellular proteinSide 1 = ADP + phosphate + cellular proteinSide 2.. In terms of biological role, part of the Sec protein translocase complex. Interacts with the SecYEG preprotein conducting channel. Has a central role in coupling the hydrolysis of ATP to the transfer of proteins into and across the cell membrane, serving both as a receptor for the preprotein-SecB complex and as an ATP-driven molecular motor driving the stepwise translocation of polypeptide chains across the membrane. This Pseudomonas syringae pv. syringae (strain B728a) protein is Protein translocase subunit SecA.